Here is a 154-residue protein sequence, read N- to C-terminus: Putative pre-16S rRNA nuclease (154 aa).

This sequence belongs to the YqgF nuclease family.

The protein localises to the cytoplasm. In terms of biological role, could be a nuclease involved in processing of the 5'-end of pre-16S rRNA. The sequence is that of Putative pre-16S rRNA nuclease from Rickettsia rickettsii (strain Iowa).